Consider the following 133-residue polypeptide: Small ribosomal subunit protein eS24 (133 aa).

Residue M1 is modified to N-acetylmethionine. Phosphothreonine is present on T9. K37 is covalently cross-linked (Glycyl lysine isopeptide (Lys-Gly) (interchain with G-Cter in SUMO2)). The disordered stretch occupies residues 92–133; the sequence is ARHGLYEKKKTSRKQRKERKNRMKKVRGTAKANVGAGKKPKE. The segment covering 101–119 has biased composition (basic residues); the sequence is KTSRKQRKERKNRMKKVRG.

The protein belongs to the eukaryotic ribosomal protein eS24 family. Component of the small ribosomal subunit. Part of the small subunit (SSU) processome, composed of more than 70 proteins and the RNA chaperone small nucleolar RNA (snoRNA) U3.

It is found in the cytoplasm. It localises to the nucleus. Its subcellular location is the nucleolus. Functionally, component of the small ribosomal subunit. The ribosome is a large ribonucleoprotein complex responsible for the synthesis of proteins in the cell. Required for processing of pre-rRNA and maturation of 40S ribosomal subunits. Part of the small subunit (SSU) processome, first precursor of the small eukaryotic ribosomal subunit. During the assembly of the SSU processome in the nucleolus, many ribosome biogenesis factors, an RNA chaperone and ribosomal proteins associate with the nascent pre-rRNA and work in concert to generate RNA folding, modifications, rearrangements and cleavage as well as targeted degradation of pre-ribosomal RNA by the RNA exosome. The polypeptide is Small ribosomal subunit protein eS24 (RPS24) (Oryctolagus cuniculus (Rabbit)).